The sequence spans 290 residues: Fructose-1,6-bisphosphatase class 1 (290 aa).

Positions 78, 96, 98, and 99 each coordinate Mg(2+). Substrate is bound by residues 99 to 102, Y201, and K226; that span reads DGSS. Residue E232 participates in Mg(2+) binding.

It belongs to the FBPase class 1 family. As to quaternary structure, homotetramer. Mg(2+) is required as a cofactor.

It localises to the cytoplasm. The enzyme catalyses beta-D-fructose 1,6-bisphosphate + H2O = beta-D-fructose 6-phosphate + phosphate. It functions in the pathway carbohydrate biosynthesis; gluconeogenesis. The protein is Fructose-1,6-bisphosphatase class 1 of Helicobacter pylori (strain G27).